Consider the following 775-residue polypeptide: Armadillo-like helical domain-containing protein 4 (775 aa).

Residues 1–47 (MLQDSITGIVNSFNLFFPSTMSRPTLMPTCVAFCSILFLTLATGCQA) form the signal peptide. At 48–715 (FPKVERRETA…KDKAGYMSGM (668 aa)) the chain is on the extracellular side. N-linked (GlcNAc...) asparagine glycosylation is present at Asn76. Disordered regions lie at residues 120–148 (AGLL…PGPS), 247–273 (VPGV…DGQS), and 324–366 (KFES…PSST). Polar residues predominate over residues 129 to 142 (GVYSSSEPVVSASE). Residues 324 to 335 (KFESISRGRPPE) are compositionally biased toward basic and acidic residues. Residue Asn476 is glycosylated (N-linked (GlcNAc...) asparagine). The tract at residues 559 to 669 (IPVLGSPMAP…PGITSQEPDI (111 aa)) is disordered. The span at 577 to 599 (TISSALPSEGRTSPSISRPNTAA) shows a compositional bias: polar residues. Positions 606-640 (LESEEVEDDEDEEDEEDEEEEEEDEEDEEDEEDKE) are enriched in acidic residues. The chain crosses the membrane as a helical span at residues 716–736 (LVPVGVGIAGALFILGALYSI). Over 737–775 (KVMNRRRRNGFKRHKRKQREFNSMQDRVMLLADSSEDEF) the chain is Cytoplasmic. Phosphoserine is present on residues Ser770 and Ser771.

In terms of assembly, interacts with IL6ST; this interaction prevents IL6ST protein homodimerization and bridges ARMH4 with IL6R and STAT3 and therefore inhibits phosphorylation of STAT3 at 'Tyr-705'. Interacts (via cytoplasmic tail) with RICTOR; this interaction bridges ARMH4 to the mTORC2 complex and inhibits the mTORC2 kinase activity. As to expression, expressed in bone-marroew cells.

It localises to the membrane. May modulate immune response and may play a role in inflammation. Down-modulates STAT3 signaling throught direct interaction with IL6ST, resulting in the inhibition of phosphorylation of STAT3 at 'Tyr-705'. May negatively regulates AKT signaling by modulating the activity of mTORC2 complex through RICTOR interaction. This is Armadillo-like helical domain-containing protein 4 from Mus musculus (Mouse).